Reading from the N-terminus, the 693-residue chain is Protein-glutamine gamma-glutamyltransferase E (693 aa).

Ala-2 is modified (N-acetylalanine). The residue at position 111 (Tyr-111) is a Phosphotyrosine. Position 112 is a phosphothreonine (Thr-112). Ca(2+) is bound by residues Ala-222, Asn-225, Asn-227, Asp-228, and Asn-230. Cys-273 is an active-site residue. Ca(2+) contacts are provided by Asp-302, Asp-304, Asn-306, Ser-308, and Asp-325. Active-site residues include His-331 and Asp-354. Positions 394, 416, 444, and 449 each coordinate Ca(2+).

It belongs to the transglutaminase superfamily. Transglutaminase family. In terms of assembly, consists of two polypeptide chains, which are synthesized as a precursor form of a single polypeptide. It depends on Ca(2+) as a cofactor. Activated by proteolytic processing. In vitro activation is commonly achieved by cleavage with dispase, a neutral bacterial protease. Dispase cleavage site was proposed to lie between Ser-470 and Ser-471 or between Pro-465 and Phe-466. Physiological activation may be catalyzed by CTSL and, to a lesser extent, by CTSS, but not by CTSB, CTSD nor CTSV.

Its subcellular location is the cytoplasm. It carries out the reaction L-glutaminyl-[protein] + L-lysyl-[protein] = [protein]-L-lysyl-N(6)-5-L-glutamyl-[protein] + NH4(+). Its function is as follows. Catalyzes the calcium-dependent formation of isopeptide cross-links between glutamine and lysine residues in various proteins, as well as the conjugation of polyamines to proteins. Involved in the formation of the cornified envelope (CE), a specialized component consisting of covalent cross-links of proteins beneath the plasma membrane of terminally differentiated keratinocytes. Catalyzes small proline-rich proteins (SPRR1 and SPRR2) and LOR cross-linking to form small interchain oligomers, which are further cross-linked by TGM1 onto the growing CE scaffold. In hair follicles, involved in cross-linking structural proteins to hardening the inner root sheath. The protein is Protein-glutamine gamma-glutamyltransferase E (TGM3) of Homo sapiens (Human).